The chain runs to 166 residues: Cofilin-1 (166 aa).

At Ala2 the chain carries N-acetylalanine. Ser3 and Ser8 each carry phosphoserine. The 150-residue stretch at 4 to 153 (GVAVSDGVIK…KDRCTLAEKL (150 aa)) folds into the ADF-H domain. At Lys13 the chain carries N6-acetyllysine. Phosphothreonine is present on Thr25. The Nuclear localization signal motif lies at 30–34 (KKRKK). At Ser41 the chain carries Phosphoserine. The residue at position 63 (Thr63) is a Phosphothreonine. Residue Tyr68 is modified to Phosphotyrosine. Lys73 bears the N6-acetyllysine mark. Tyr82 bears the Phosphotyrosine mark. Lys132 participates in a covalent cross-link: Glycyl lysine isopeptide (Lys-Gly) (interchain with G-Cter in SUMO2). Tyr140 is modified (phosphotyrosine). An N6-acetyllysine modification is found at Lys144. The residue at position 156 (Ser156) is a Phosphoserine.

Belongs to the actin-binding proteins ADF family. Can bind G- and F-actin in a 1:1 ratio of cofilin to actin. It is a major component of intranuclear and cytoplasmic actin rods. Interacts with the subcortical maternal complex (SCMC) via interaction with TLE6 and NLRP5. Interacts with C9orf72. In terms of processing, inactivated by phosphorylation on Ser-3. Phosphorylated on Ser-3 in resting cells. Dephosphorylated by PDXP/chronophin; this restores its activity in promoting actin filament depolymerization. The phosphorylation of Ser-24 may prevent recognition of the nuclear localization signal. Phosphorylated via a ARRB1-RAC1-LIMK1-PAK1 cascade upon active ligand stimulation of atypical chemokine receptor ACKR2. As to expression, widely distributed in various tissues. Not found in skeletal muscle.

The protein resides in the nucleus matrix. The protein localises to the cytoplasm. It localises to the cytoskeleton. It is found in the cell projection. Its subcellular location is the ruffle membrane. The protein resides in the lamellipodium membrane. The protein localises to the lamellipodium. It localises to the growth cone. It is found in the axon. In terms of biological role, binds to F-actin and exhibits pH-sensitive F-actin depolymerizing activity. In conjunction with the subcortical maternal complex (SCMC), plays an essential role for zygotes to progress beyond the first embryonic cell divisions via regulation of actin dynamics. Required for the centralization of the mitotic spindle and symmetric division of zygotes. Plays a role in the regulation of cell morphology and cytoskeletal organization in epithelial cells. Required for the up-regulation of atypical chemokine receptor ACKR2 from endosomal compartment to cell membrane, increasing its efficiency in chemokine uptake and degradation. Required for neural tube morphogenesis and neural crest cell migration. This is Cofilin-1 (Cfl1) from Mus musculus (Mouse).